Consider the following 365-residue polypeptide: tRNA N6-adenosine threonylcarbamoyltransferase (365 aa).

Histidine 119 and histidine 123 together coordinate Fe cation. Substrate-binding positions include 141-145, aspartate 174, glycine 187, and asparagine 289; that span reads LVSGG. Fe cation is bound at residue aspartate 317. Positions 342 to 365 are disordered; sequence ARPRWPLDSKSPAMLGSGKKGAKA.

It belongs to the KAE1 / TsaD family. Requires Fe(2+) as cofactor.

It is found in the cytoplasm. The catalysed reaction is L-threonylcarbamoyladenylate + adenosine(37) in tRNA = N(6)-L-threonylcarbamoyladenosine(37) in tRNA + AMP + H(+). Its function is as follows. Required for the formation of a threonylcarbamoyl group on adenosine at position 37 (t(6)A37) in tRNAs that read codons beginning with adenine. Is involved in the transfer of the threonylcarbamoyl moiety of threonylcarbamoyl-AMP (TC-AMP) to the N6 group of A37, together with TsaE and TsaB. TsaD likely plays a direct catalytic role in this reaction. This Roseobacter denitrificans (strain ATCC 33942 / OCh 114) (Erythrobacter sp. (strain OCh 114)) protein is tRNA N6-adenosine threonylcarbamoyltransferase.